A 413-amino-acid chain; its full sequence is Aspartate aminotransferase, cytoplasmic (413 aa).

2 residues coordinate L-aspartate: glycine 39 and tryptophan 141. Position 149 is a phosphoserine (serine 149). Asparagine 195 lines the L-aspartate pocket. N6-(pyridoxal phosphate)lysine is present on lysine 259. Arginine 387 serves as a coordination point for L-aspartate.

The protein belongs to the class-I pyridoxal-phosphate-dependent aminotransferase family. As to quaternary structure, homodimer. It depends on pyridoxal 5'-phosphate as a cofactor.

It is found in the cytoplasm. The catalysed reaction is L-aspartate + 2-oxoglutarate = oxaloacetate + L-glutamate. It catalyses the reaction L-cysteine + 2-oxoglutarate = 2-oxo-3-sulfanylpropanoate + L-glutamate. It carries out the reaction (2S)-2-aminobutanoate + 2-oxoglutarate = 2-oxobutanoate + L-glutamate. The enzyme catalyses 3-sulfino-L-alanine + 2-oxoglutarate = 3-sulfinopyruvate + L-glutamate. Its function is as follows. Biosynthesis of L-glutamate from L-aspartate or L-cysteine. Important regulator of levels of glutamate, the major excitatory neurotransmitter of the vertebrate central nervous system. Acts as a scavenger of glutamate in brain neuroprotection. The aspartate aminotransferase activity is involved in hepatic glucose synthesis during development and in adipocyte glyceroneogenesis. Using L-cysteine as substrate, regulates levels of mercaptopyruvate, an important source of hydrogen sulfide. Mercaptopyruvate is converted into H(2)S via the action of 3-mercaptopyruvate sulfurtransferase (3MST). Hydrogen sulfide is an important synaptic modulator and neuroprotectant in the brain. This is Aspartate aminotransferase, cytoplasmic from Pongo abelii (Sumatran orangutan).